We begin with the raw amino-acid sequence, 121 residues long: Neuromedin-B (121 aa).

An N-terminal signal peptide occupies residues 1-24 (MARRAGGARMFGSLLLFALLAAGV). Met56 carries the post-translational modification Methionine amide. Residues 60 to 121 (SLEPSSPSPL…RRLLVQILQK (62 aa)) constitute a propeptide that is removed on maturation.

It belongs to the bombesin/neuromedin-B/ranatensin family.

It localises to the secreted. The protein resides in the cell projection. The protein localises to the neuron projection. Functionally, stimulates smooth muscle contraction. Induces sighing by acting directly on the pre-Botzinger complex, a cluster of several thousand neurons in the ventrolateral medulla responsible for inspiration during respiratory activity. Contributes to the induction of sneezing following exposure to chemical irritants or allergens which causes release of NMB by nasal sensory neurons and activation of NMBR-expressing neurons in the sneeze-evoking region of the brainstem. These in turn activate neurons of the caudal ventral respiratory group, giving rise to the sneezing response. Contributes to induction of acute itch, possibly through activation of the NMBR receptor on dorsal root ganglion neurons. Increases expression of NMBR and steroidogenic mediators STAR, CYP11A1 and HSD3B1 in Leydig cells, induces secretion of testosterone by Leydig cells and also promotes Leydig cell proliferation. Plays a role in the innate immune response to influenza A virus infection by enhancing interferon alpha expression and reducing expression of IL6. Plays a role in CSF1-induced proliferation of osteoclast precursors by contributing to the positive regulation of the expression of the CSF1 receptor CSF1R. The protein is Neuromedin-B (NMB) of Homo sapiens (Human).